The chain runs to 1500 residues: Carbamoyl-phosphate synthase [ammonia], mitochondrial (1500 aa).

The transit peptide at 1-38 (MTRILTACKVVKTLKSGFGLANVTSKRQWDFSRPGIRL) directs the protein to the mitochondrion. The tract at residues 39-218 (LSVKAQTAHI…VKVFGKGNPT (180 aa)) is anthranilate phosphoribosyltransferase homolog. 3 positions are modified to N6-acetyllysine; alternate: K55, K57, and K119. K55 carries the N6-glutaryllysine; alternate modification. N6-succinyllysine; alternate is present on residues K55, K57, and K119. A Phosphoserine modification is found at S148. N6-acetyllysine; alternate is present on residues K157 and K171. An N6-succinyllysine; alternate modification is found at K157. K171 is modified (N6-glutaryllysine; alternate). K176 carries the N6-glutaryllysine modification. N6-acetyllysine is present on K182. A Phosphoserine modification is found at S189. The residue at position 197 (K197) is an N6-acetyllysine. Residues K207, K210, K214, K219, and K228 each carry the N6-acetyllysine; alternate modification. 5 positions are modified to N6-glutaryllysine; alternate: K207, K210, K214, K219, and K228. K207 is modified (N6-succinyllysine; alternate). K214 is modified (N6-succinyllysine; alternate). In terms of domain architecture, Glutamine amidotransferase type-1 spans 219-404 (KVVAVDCGIK…FSLIKKGKGT (186 aa)). N6-glutaryllysine is present on K237. K279 is modified (N6-acetyllysine). N6-acetyllysine; alternate is present on residues K280, K287, K307, and K310. K280 bears the N6-glutaryllysine; alternate mark. N6-succinyllysine; alternate occurs at positions 287 and 307. Residues K307 and K310 each carry the N6-glutaryllysine; alternate modification. K400 carries the post-translational modification N6-succinyllysine. K402, K412, K453, and K458 each carry N6-glutaryllysine; alternate. Residues K402 and K412 each carry the N6-succinyllysine; alternate modification. Residues K412, K453, K458, K522, K527, and K532 each carry the N6-acetyllysine; alternate modification. N6-succinyllysine; alternate occurs at positions 458, 522, and 527. K527 and K532 each carry N6-glutaryllysine; alternate. S537 is subject to Phosphoserine; alternate. S537 carries an O-linked (GlcNAc) serine; alternate glycan. At S540 the chain carries Phosphoserine. In terms of domain architecture, ATP-grasp 1 spans 551-743 (SDKLNEINEK…LAFIAAKIAL (193 aa)). An N6-acetyllysine; alternate mark is found at K553 and K560. K553 is subject to N6-glutaryllysine; alternate. N6-succinyllysine; alternate is present on residues K553 and K560. S569 is subject to Phosphoserine. N6-acetyllysine; alternate occurs at positions 575, 603, and 612. N6-succinyllysine; alternate occurs at positions 575, 603, and 612. K630 bears the N6-acetyllysine mark. Position 728 is an N6-glutaryllysine (K728). An N6-acetyllysine; alternate mark is found at K751, K757, K772, K793, K811, K831, K841, and K856. N6-succinyllysine; alternate is present on residues K751 and K757. 4 positions are modified to N6-glutaryllysine; alternate: K757, K772, K793, and K811. K793 is modified (N6-succinyllysine; alternate). N6-succinyllysine; alternate is present on K831. N6-glutaryllysine; alternate is present on residues K841 and K856. K869 bears the N6-glutaryllysine mark. K875, K889, and K892 each carry N6-acetyllysine; alternate. K875, K889, and K892 each carry N6-glutaryllysine; alternate. An N6-succinyllysine; alternate mark is found at K875, K889, and K892. 2 positions are modified to phosphoserine: S896 and S898. N6-acetyllysine; alternate is present on residues K908, K915, and K919. An N6-glutaryllysine; alternate mark is found at K908, K915, and K919. N6-succinyllysine; alternate is present on residues K915 and K919. The residue at position 935 (K935) is an N6-acetyllysine. A Phosphoserine modification is found at S1036. An N6-acetyllysine; alternate modification is found at K1074. At K1074 the chain carries N6-glutaryllysine; alternate. K1074 bears the N6-succinyllysine; alternate mark. Residues S1079, S1090, and S1093 each carry the phosphoserine modification. Residues 1093-1284 (SAVLDELKVA…FIDVATKVMI (192 aa)) form the ATP-grasp 2 domain. At K1100 the chain carries N6-acetyllysine; alternate. Position 1100 is an N6-succinyllysine; alternate (K1100). Residue K1149 is modified to N6-succinyllysine. 2 positions are modified to N6-acetyllysine; alternate: K1168 and K1183. Residues K1168 and K1183 each carry the N6-glutaryllysine; alternate modification. 2 positions are modified to N6-succinyllysine; alternate: K1168 and K1183. S1203 is modified (phosphoserine). K1222 is subject to N6-acetyllysine. An N6-glutaryllysine modification is found at K1224. 3 positions are modified to N6-acetyllysine; alternate: K1232, K1269, and K1291. N6-succinyllysine; alternate is present on residues K1232, K1269, and K1291. An O-linked (GlcNAc) serine glycan is attached at S1331. T1332 carries O-linked (GlcNAc) threonine glycosylation. Residues 1355 to 1500 (FKIPQKGILI…YRQYSAGKAA (146 aa)) enclose the MGS-like domain. N6-acetyllysine; alternate is present on K1356. 2 positions are modified to N6-glutaryllysine; alternate: K1356 and K1360. 2 positions are modified to N6-succinyllysine; alternate: K1356 and K1360. Residues T1391, T1394, and W1410 each contribute to the N-acetyl-L-glutamate site. 2 positions are modified to phosphoserine: S1419 and S1431. N1437 and N1440 together coordinate N-acetyl-L-glutamate. K1444 carries the post-translational modification N6-acetyllysine; alternate. K1444 bears the N6-succinyllysine; alternate mark. N1449 is an N-acetyl-L-glutamate binding site. N6-acetyllysine; alternate occurs at positions 1471, 1479, and 1486. Residues K1471, K1479, and K1486 each carry the N6-succinyllysine; alternate modification. An N6-glutaryllysine; alternate mark is found at K1479 and K1486.

Can form homooligomers (monomers as predominant form and dimers). Post-translationally, 50% of the mature protein that was isolated had Leu-39 as its N-terminal residue and 50% had Ser-40 suggesting two adjacent processing sites. However, the possibility of proteolytic removal of Leu-39 during the isolation of the enzyme cannot be excluded. Undergoes proteolytic cleavage in the C-terminal region corresponding to the loss of approximately 12 AA residues from the C-terminus. In terms of processing, succinylated at Lys-287 and Lys-1291. Desuccinylated at Lys-1291 by SIRT5, leading to activation. Glutarylated. Glutarylation levels increase during fasting. Deglutarylated by SIRT5 at Lys-55, Lys-219, Lys-412, Lys-889, Lys-892, Lys-915, Lys-1360 and Lys-1486, leading to activation. Primarily in the liver and small intestine.

The protein resides in the mitochondrion. The protein localises to the nucleus. It is found in the nucleolus. It localises to the cell membrane. It carries out the reaction hydrogencarbonate + NH4(+) + 2 ATP = carbamoyl phosphate + 2 ADP + phosphate + 2 H(+). Its activity is regulated as follows. Requires N-acetyl-L-glutamate (NAG) as an allosteric activator. N-acetyl-L-beta-phenylglutamate (Phe-NAG) can also activate CPSase I, but with an activation constant that is 2-fold higher than that for NAG. Functionally, involved in the urea cycle of ureotelic animals where the enzyme plays an important role in removing excess ammonia from the cell. The polypeptide is Carbamoyl-phosphate synthase [ammonia], mitochondrial (Cps1) (Rattus norvegicus (Rat)).